The primary structure comprises 185 residues: Large ribosomal subunit protein uL16m (185 aa).

The protein belongs to the universal ribosomal protein uL16 family.

The protein resides in the mitochondrion. The protein is Large ribosomal subunit protein uL16m (RPL16) of Zea mays (Maize).